Consider the following 217-residue polypeptide: tRNA (guanine-N(7)-)-methyltransferase (217 aa).

Glu44, Glu69, Asp96, and Asp118 together coordinate S-adenosyl-L-methionine. Residue Asp118 is part of the active site. Residues Lys122, Asp154, and 191-194 contribute to the substrate site; that span reads TEYE.

This sequence belongs to the class I-like SAM-binding methyltransferase superfamily. TrmB family.

It carries out the reaction guanosine(46) in tRNA + S-adenosyl-L-methionine = N(7)-methylguanosine(46) in tRNA + S-adenosyl-L-homocysteine. It participates in tRNA modification; N(7)-methylguanine-tRNA biosynthesis. In terms of biological role, catalyzes the formation of N(7)-methylguanine at position 46 (m7G46) in tRNA. The protein is tRNA (guanine-N(7)-)-methyltransferase of Bacillus cytotoxicus (strain DSM 22905 / CIP 110041 / 391-98 / NVH 391-98).